The sequence spans 67 residues: UPF0337 protein BCE_3655 (67 aa).

It belongs to the UPF0337 (CsbD) family.

The polypeptide is UPF0337 protein BCE_3655 (Bacillus cereus (strain ATCC 10987 / NRS 248)).